The following is a 406-amino-acid chain: Dual-specificity RNA methyltransferase RlmN (406 aa).

Glu-121 functions as the Proton acceptor in the catalytic mechanism. The Radical SAM core domain maps to 127-377 (ERDRGTLCVS…VRTPRGRDIL (251 aa)). A disulfide bond links Cys-134 and Cys-380. The [4Fe-4S] cluster site is built by Cys-141, Cys-145, and Cys-148. S-adenosyl-L-methionine contacts are provided by residues 206–207 (GE), Ser-238, 260–262 (SLH), and Asn-337. Residue Cys-380 is the S-methylcysteine intermediate of the active site.

It belongs to the radical SAM superfamily. RlmN family. It depends on [4Fe-4S] cluster as a cofactor.

Its subcellular location is the cytoplasm. The enzyme catalyses adenosine(2503) in 23S rRNA + 2 reduced [2Fe-2S]-[ferredoxin] + 2 S-adenosyl-L-methionine = 2-methyladenosine(2503) in 23S rRNA + 5'-deoxyadenosine + L-methionine + 2 oxidized [2Fe-2S]-[ferredoxin] + S-adenosyl-L-homocysteine. It carries out the reaction adenosine(37) in tRNA + 2 reduced [2Fe-2S]-[ferredoxin] + 2 S-adenosyl-L-methionine = 2-methyladenosine(37) in tRNA + 5'-deoxyadenosine + L-methionine + 2 oxidized [2Fe-2S]-[ferredoxin] + S-adenosyl-L-homocysteine. Specifically methylates position 2 of adenine 2503 in 23S rRNA and position 2 of adenine 37 in tRNAs. m2A2503 modification seems to play a crucial role in the proofreading step occurring at the peptidyl transferase center and thus would serve to optimize ribosomal fidelity. The chain is Dual-specificity RNA methyltransferase RlmN from Azorhizobium caulinodans (strain ATCC 43989 / DSM 5975 / JCM 20966 / LMG 6465 / NBRC 14845 / NCIMB 13405 / ORS 571).